We begin with the raw amino-acid sequence, 621 residues long: UvrABC system protein C (621 aa).

Positions 20–98 (TAPGVYRMYA…IKSLTPRYNV (79 aa)) constitute a GIY-YIG domain. A UVR domain is found at 207-242 (DLLAEELIQAMQVASEHLEFEQAARLRDLLTSLRSM).

This sequence belongs to the UvrC family. As to quaternary structure, interacts with UvrB in an incision complex.

Its subcellular location is the cytoplasm. Functionally, the UvrABC repair system catalyzes the recognition and processing of DNA lesions. UvrC both incises the 5' and 3' sides of the lesion. The N-terminal half is responsible for the 3' incision and the C-terminal half is responsible for the 5' incision. The chain is UvrABC system protein C from Xylella fastidiosa (strain Temecula1 / ATCC 700964).